A 339-amino-acid polypeptide reads, in one-letter code: MRSAYAAMSVIGAGSYGTALAITLARNGHEVVLWGHNPQHQAQLQADRCHQAFLPDVPFPDTLIVESDLASAITASRDVLVVVPSHVFGDVLQQIKPHLRADSRLVWATKGLEKETGRLLQDVARETLGESIPLAVISGPTFAKELAAGLPTAIALAATDGVFAEDLQQLLHCGKSFRVYNNPDFIGVQLGGAVKNVIAIGAGISDGIGFGANARTALITRGLAEMSRLGAALGADPATFMGMAGLGDLVLTCTDNQSRNRRFGMMLGQGFDVEGAQDAIGQVVEGFRNTKEVKVLAERYAVEMPITEQIYQVLYCGKNTRDAALSLLGRSRKDENNGG.

Ser15, Tyr16, His36, and Lys110 together coordinate NADPH. Sn-glycerol 3-phosphate is bound by residues Lys110, Gly139, and Thr141. Ala143 provides a ligand contact to NADPH. Residues Lys195, Asp248, Ser258, Arg259, and Asn260 each contribute to the sn-glycerol 3-phosphate site. Lys195 acts as the Proton acceptor in catalysis. NADPH is bound at residue Arg259. NADPH contacts are provided by Val283 and Glu285.

It belongs to the NAD-dependent glycerol-3-phosphate dehydrogenase family.

It localises to the cytoplasm. The catalysed reaction is sn-glycerol 3-phosphate + NAD(+) = dihydroxyacetone phosphate + NADH + H(+). It catalyses the reaction sn-glycerol 3-phosphate + NADP(+) = dihydroxyacetone phosphate + NADPH + H(+). It participates in membrane lipid metabolism; glycerophospholipid metabolism. Catalyzes the reduction of the glycolytic intermediate dihydroxyacetone phosphate (DHAP) to sn-glycerol 3-phosphate (G3P), the key precursor for phospholipid synthesis. The protein is Glycerol-3-phosphate dehydrogenase [NAD(P)+] of Erwinia tasmaniensis (strain DSM 17950 / CFBP 7177 / CIP 109463 / NCPPB 4357 / Et1/99).